The chain runs to 65 residues: Small ribosomal subunit protein eS27 (65 aa).

The Zn(2+) site is built by Cys-20, Cys-23, Cys-39, and Cys-42. A C4-type zinc finger spans residues 20–42 (CIDCGNEQIVFSHPATPVRCLVC).

The protein belongs to the eukaryotic ribosomal protein eS27 family. In terms of assembly, part of the 30S ribosomal subunit. Requires Zn(2+) as cofactor.

The sequence is that of Small ribosomal subunit protein eS27 from Thermococcus kodakarensis (strain ATCC BAA-918 / JCM 12380 / KOD1) (Pyrococcus kodakaraensis (strain KOD1)).